Consider the following 264-residue polypeptide: Major prion protein (264 aa).

An N-terminal signal peptide occupies residues 1–24; the sequence is MVKSHIGSWILVLFVAMWSDVGLC. Positions 25-241 are interaction with GRB2, ERI3 and SYN1; that stretch reads KKRPKPGGGW…ESQAYYQRGA (217 aa). The tract at residues 28 to 118 is disordered; sequence PKPGGGWNTG…QWNKPSKPKT (91 aa). Repeat copies occupy residues 54–62, 63–70, 71–78, 79–86, 87–94, and 95–103. A 6 X 8 AA tandem repeats of P-H-G-G-G-W-G-Q region spans residues 54–103; sequence PQGGGSWGQPHGGGWGQPHGGSWGQPHGGGWGQPHGGGWGQPHGGGGWGQ. The span at 55–107 shows a compositional bias: gly residues; the sequence is QGGGSWGQPHGGGWGQPHGGSWGQPHGGGWGQPHGGGWGQPHGGGGWGQGGTH. H72, G73, G74, H80, G81, G82, H88, G89, G90, H96, G98, and G99 together coordinate Cu(2+). Residues C190 and C225 are joined by a disulfide bond. N-linked (GlcNAc...) asparagine glycosylation is found at N192 and N208. Residue A241 is the site of GPI-anchor amidated alanine attachment. The propeptide at 242 to 264 is removed in mature form; that stretch reads SVVLFSSPPVVLLISFLIFLIVG.

Belongs to the prion family. As to quaternary structure, monomer and homodimer. Has a tendency to aggregate into amyloid fibrils containing a cross-beta spine, formed by a steric zipper of superposed beta-strands. Soluble oligomers may represent an intermediate stage on the path to fibril formation. Copper binding may promote oligomerization. Interacts with GRB2, APP, ERI3/PRNPIP and SYN1. Mislocalized cytosolically exposed PrP interacts with MGRN1; this interaction alters MGRN1 subcellular location and causes lysosomal enlargement. Interacts with KIAA1191.

It localises to the cell membrane. The protein localises to the golgi apparatus. Its function is as follows. Its primary physiological function is unclear. Has cytoprotective activity against internal or environmental stresses. May play a role in neuronal development and synaptic plasticity. May be required for neuronal myelin sheath maintenance. May play a role in iron uptake and iron homeostasis. Soluble oligomers are toxic to cultured neuroblastoma cells and induce apoptosis (in vitro). Association with GPC1 (via its heparan sulfate chains) targets PRNP to lipid rafts. Also provides Cu(2+) or Zn(2+) for the ascorbate-mediated GPC1 deaminase degradation of its heparan sulfate side chains. The sequence is that of Major prion protein (PRNP) from Boselaphus tragocamelus (Nilgai).